The following is a 456-amino-acid chain: Bifunctional protein GlmU (456 aa).

Residues 1–229 (MLNNAMSVVI…LSEVEGVNNR (229 aa)) form a pyrophosphorylase region. Residues 11–14 (LAAG), lysine 25, glutamine 76, 81–82 (GT), 103–105 (YGD), glycine 140, glutamate 154, asparagine 169, and asparagine 227 each bind UDP-N-acetyl-alpha-D-glucosamine. Mg(2+) is bound at residue aspartate 105. Asparagine 227 provides a ligand contact to Mg(2+). A linker region spans residues 230–250 (LQLSRLERVYQSEQAEKLLLA). Residues 251 to 456 (GVMLRDPARF…EGWRRPVKKK (206 aa)) are N-acetyltransferase. 2 residues coordinate UDP-N-acetyl-alpha-D-glucosamine: arginine 333 and lysine 351. Residue histidine 363 is the Proton acceptor of the active site. UDP-N-acetyl-alpha-D-glucosamine contacts are provided by tyrosine 366 and asparagine 377. Acetyl-CoA-binding positions include alanine 380, 386 to 387 (NY), serine 405, alanine 423, and arginine 440.

In the N-terminal section; belongs to the N-acetylglucosamine-1-phosphate uridyltransferase family. This sequence in the C-terminal section; belongs to the transferase hexapeptide repeat family. As to quaternary structure, homotrimer. It depends on Mg(2+) as a cofactor.

The protein resides in the cytoplasm. The enzyme catalyses alpha-D-glucosamine 1-phosphate + acetyl-CoA = N-acetyl-alpha-D-glucosamine 1-phosphate + CoA + H(+). It carries out the reaction N-acetyl-alpha-D-glucosamine 1-phosphate + UTP + H(+) = UDP-N-acetyl-alpha-D-glucosamine + diphosphate. The protein operates within nucleotide-sugar biosynthesis; UDP-N-acetyl-alpha-D-glucosamine biosynthesis; N-acetyl-alpha-D-glucosamine 1-phosphate from alpha-D-glucosamine 6-phosphate (route II): step 2/2. Its pathway is nucleotide-sugar biosynthesis; UDP-N-acetyl-alpha-D-glucosamine biosynthesis; UDP-N-acetyl-alpha-D-glucosamine from N-acetyl-alpha-D-glucosamine 1-phosphate: step 1/1. It participates in bacterial outer membrane biogenesis; LPS lipid A biosynthesis. Its function is as follows. Catalyzes the last two sequential reactions in the de novo biosynthetic pathway for UDP-N-acetylglucosamine (UDP-GlcNAc). The C-terminal domain catalyzes the transfer of acetyl group from acetyl coenzyme A to glucosamine-1-phosphate (GlcN-1-P) to produce N-acetylglucosamine-1-phosphate (GlcNAc-1-P), which is converted into UDP-GlcNAc by the transfer of uridine 5-monophosphate (from uridine 5-triphosphate), a reaction catalyzed by the N-terminal domain. This Escherichia fergusonii (strain ATCC 35469 / DSM 13698 / CCUG 18766 / IAM 14443 / JCM 21226 / LMG 7866 / NBRC 102419 / NCTC 12128 / CDC 0568-73) protein is Bifunctional protein GlmU.